A 745-amino-acid chain; its full sequence is uncharacterized protein (745 aa).

Residues 158 to 256 (NQVCDYIELH…HQTPKQYRGD (99 aa)) enclose the HTH araC/xylS-type domain. 2 consecutive DNA-binding regions (H-T-H motif) follow at residues 175 to 196 (SELS…AESL) and 223 to 246 (ITDI…KHFT).

This is an uncharacterized protein from Staphylococcus aureus (strain MRSA252).